The following is a 211-amino-acid chain: MRLTAKQVTWLKVCLHLAGLLPFLWLVWAINHGGLGADPVKDIQHFTGRTALKFLLATLLITPLARYAKQPLLIRTRRLLGLWCFAWATLHLTSYALLELGVNNLALLGKELITRPYLTLGIISWVILLALAFTSTQAMQRKLGKHWQQLHNFVYLVAILAPIHYLWSVKIISPQPLIYAGLAVLLLALRYKKLLSLFNRLRKQVHNKLSV.

The next 5 membrane-spanning stretches (helical) occupy residues 10–30 (WLKVCLHLAGLLPFLWLVWAI), 82–102 (LWCFAWATLHLTSYALLELGV), 116–136 (PYLTLGIISWVILLALAFTST), 153–173 (FVYLVAILAPIHYLWSVKIIS), and 178–198 (IYAGLAVLLLALRYKKLLSLF).

The protein belongs to the MsrQ family. Heterodimer of a catalytic subunit (MsrP) and a heme-binding subunit (MsrQ). Requires FMN as cofactor. Heme b serves as cofactor.

It localises to the cell inner membrane. Part of the MsrPQ system that repairs oxidized periplasmic proteins containing methionine sulfoxide residues (Met-O), using respiratory chain electrons. Thus protects these proteins from oxidative-stress damage caused by reactive species of oxygen and chlorine generated by the host defense mechanisms. MsrPQ is essential for the maintenance of envelope integrity under bleach stress, rescuing a wide series of structurally unrelated periplasmic proteins from methionine oxidation, including the primary periplasmic chaperone SurA and the lipoprotein Pal. MsrQ provides electrons for reduction to the reductase catalytic subunit MsrP, using the quinone pool of the respiratory chain. This chain is Protein-methionine-sulfoxide reductase heme-binding subunit MsrQ, found in Escherichia coli (strain 55989 / EAEC).